The primary structure comprises 167 residues: Leptin (167 aa).

The first 21 residues, 1 to 21 (MRCGPLCRFLWLWPYLSCVEA), serve as a signal peptide directing secretion. Cysteines 117 and 167 form a disulfide.

This sequence belongs to the leptin family.

It is found in the secreted. Functionally, key player in the regulation of energy balance and body weight control. Once released into the circulation, has central and peripheral effects by binding LEPR, found in many tissues, which results in the activation of several major signaling pathways. In the hypothalamus, acts as an appetite-regulating factor that induces a decrease in food intake and an increase in energy consumption by inducing anorexinogenic factors and suppressing orexigenic neuropeptides, also regulates bone mass and secretion of hypothalamo-pituitary-adrenal hormones. In the periphery, increases basal metabolism, influences reproductive function, regulates pancreatic beta-cell function and insulin secretion, is pro-angiogenic for endothelial cell and affects innate and adaptive immunity. In the arcuate nucleus of the hypothalamus, activates by depolarization POMC neurons inducing FOS and SOCS3 expression to release anorexigenic peptides and inhibits by hyperpolarization NPY neurons inducing SOCS3 with a consequent reduction on release of orexigenic peptides. In addition to its known satiety inducing effect, has a modulatory role in nutrient absorption. In the intestine, reduces glucose absorption by enterocytes by activating PKC and leading to a sequential activation of p38, PI3K and ERK signaling pathways which exerts an inhibitory effect on glucose absorption. Acts as a growth factor on certain tissues, through the activation of different signaling pathways increases expression of genes involved in cell cycle regulation such as CCND1, via JAK2-STAT3 pathway, or VEGFA, via MAPK1/3 and PI3K-AKT1 pathways. May also play an apoptotic role via JAK2-STAT3 pathway and up-regulation of BIRC5 expression. Pro-angiogenic, has mitogenic activity on vascular endothelial cells and plays a role in matrix remodeling by regulating the expression of matrix metalloproteinases (MMPs) and tissue inhibitors of metalloproteinases (TIMPs). In innate immunity, modulates the activity and function of neutrophils by increasing chemotaxis and the secretion of oxygen radicals. Increases phagocytosis by macrophages and enhances secretion of pro-inflammatory mediators. Increases cytotoxic ability of NK cells. Plays a pro-inflammatory role, in synergy with IL1B, by inducing NOS2 which promotes the production of IL6, IL8 and Prostaglandin E2, through a signaling pathway that involves JAK2, PI3K, MAP2K1/MEK1 and MAPK14/p38. In adaptive immunity, promotes the switch of memory T-cells towards T helper-1 cell immune responses. Increases CD4(+)CD25(-) T-cell proliferation and reduces autophagy during TCR (T-cell receptor) stimulation, through MTOR signaling pathway activation and BCL2 up-regulation. The polypeptide is Leptin (LEP) (Canis lupus familiaris (Dog)).